Consider the following 416-residue polypeptide: Formyl-CoA:oxalate CoA-transferase (416 aa).

Residues 17-18, R38, 72-75, 96-98, H104, and 137-140 contribute to the CoA site; these read QS, LNTK, NFH, and KAYE. D169 (nucleophile) is an active-site residue. 248 to 250 lines the substrate pocket; sequence GGQ. Position 273-275 (273-275) interacts with CoA; sequence QEQ.

It belongs to the CoA-transferase III family. Frc subfamily. Homodimer.

It catalyses the reaction formyl-CoA + oxalate = oxalyl-CoA + formate. It functions in the pathway metabolic intermediate degradation; oxalate degradation; CO(2) and formate from oxalate: step 1/2. Involved in the catabolism of oxalate and in the adapatation to low pH via the induction of the oxalate-dependent acid tolerance response (ATR). Catalyzes the transfer of the CoA moiety from formyl-CoA to oxalate. In Escherichia coli (strain ATCC 8739 / DSM 1576 / NBRC 3972 / NCIMB 8545 / WDCM 00012 / Crooks), this protein is Formyl-CoA:oxalate CoA-transferase.